We begin with the raw amino-acid sequence, 565 residues long: MPSVNLIPSRKICLQNMINKDNVSVETIQSLLHSKQLPYFSDKRSFLLNLNCQVTDHSGRLIVCRHLASYWIAQFNKSSGHVDYHHFAFPDEIKNYVSVSEEEKAINVPAIIYFVENGSWGDIIFYIFNEMIFHSEKSRALEISTSNHNMALGLKIKETKNGGDFVIQLYDPNHTATHLRAEFNKFNLAKIKKLTVDNFLDEKHQKCYGLISDGMSIFVDRHTPTSMSSIIRWPDNLLHPKVIYHAMRMGLTELIQKVTRVVQLSDLSDNTLELLLAAKNDDGLSGLLLALQNGHSDTILAYGELLETSGLNLDKTVELLTAEGMGGRISGLSQALQNGHAETIKTYGRLLKKRAINIEYNKLKNLLTAYYYDEVHRQIPGLMFALQNGHADAIRAYGELILSPPLLNSEDIVNLLASRRYDNVPGLLLALNNGQADAILAYGDILNEAKLNLDKKAELLEAKDSNGLSGLFVALHNGCVETIIAYGKILHTADLTPHQASKLLAAEGPNGVSGLIIAFQNRNFEAIKTYMGIIKNENITPEEIAEHLDKKNGSDFLEIMKNIKS.

This sequence belongs to the Toxin_15 family.

Its subcellular location is the secreted. Its function is as follows. Effector protease that disrupts necroptosis in host cells by mediating proteolytic cleavage of host RIPK1 and RIPK3. This Shigella flexneri protein is Effector protease OspD3.